A 97-amino-acid chain; its full sequence is Large ribosomal subunit protein eL21 (97 aa).

It belongs to the eukaryotic ribosomal protein eL21 family.

This is Large ribosomal subunit protein eL21 from Methanosarcina mazei (strain ATCC BAA-159 / DSM 3647 / Goe1 / Go1 / JCM 11833 / OCM 88) (Methanosarcina frisia).